Consider the following 942-residue polypeptide: MANLEWVCVPRCYEVRKNCLTGQATLEHPLKQRTVTVVDSNPLSRALEGTDPLSQFARQDDELNDPLSQMVSEFDLKSKRRERDRTEPEDNTLQWSSRRLGILNRFTTNEKLSLSTSFLVSSGSLDGGNESIKAQTVVADKTKFRLEQLDHFDDGSMRHMMDLTQQEYIQRFEQLKQELIQSWHNDQRVKALKIAIQCAKMLADTTVLQFYPSQYVLITDILDVFGKLVYERLRAKASGDPAASAATLEREREAARDTCQNWFYKIASIRELLPRFYLELSIFKCYEFLSSSREEYERILQRLTHQLRGIADPLVSSYARCYLVRMGVTLTSSKTYIRENFADLFLIYPQIFRFVARFNLHPEIVTASSYLQLYAPAFDYMLLCLVHKSELHTQDILNECKQLKNNGAILMSVLSSFNSEFIATNALEFIALINASETPGISKSQLLRSLGSCVSSCPPLQEQRVTFLKAAFETINKLTDPNEYINCVETWAVFVSQYFTIHEVNRLLGELNTRMCLGKAYEKHYSQLQNILTRIMQNYRSIELLLIQPNFLPYLDLFQKESVRVEVCKNILSFYKQNSDEYTCDAVVTNALMYLGKILNDSVNALSVDDERRQIAQLINVFIHKVHFGNDLEQQLSFYVEARGTFSNLDAVYVTLVHAACKLATRNRSKSTGFVKACIAYCFITIPSIEAVQQQMNLYLLCGQLALQHLCLGQADACFEAALQLVNELPAATVDFDGKPRSLEPFLVSYMCNILATLIVVPDSPEQGVLYFLRLLLEVVGRHKFKVDSSAPSIIYLHSLDMLYVQSLERFPYHIKGVVSNDDLYGHDPKFLQEVNNMCAQVVDAILLQLKSLGVAQQQRSQAELALELFLRIVKYADLERETIAQLAVNLWLLANKAQSQLDVKTLPQTLRSVEIIYKQIKDASPIRAQTIAKLLLRVRSS.

This sequence belongs to the VPS35L family. In terms of assembly, component of the heterotrimeric retriever complex.

The protein resides in the endosome. In terms of biological role, acts as a component of the retriever complex. The retriever complex is a heterotrimeric complex related to retromer cargo-selective complex (CSC) and essential for retromer-independent retrieval and recycling of numerous cargos. This Drosophila melanogaster (Fruit fly) protein is VPS35 endosomal protein sorting factor-like.